A 264-amino-acid polypeptide reads, in one-letter code: [LysW]-aminoadipate/[LysW]-glutamate kinase (264 aa).

Substrate contacts are provided by residues 35–36, Arg-62, and Asn-167; that span reads GG.

This sequence belongs to the acetylglutamate kinase family. LysZ subfamily.

It localises to the cytoplasm. The enzyme catalyses [amino-group carrier protein]-C-terminal-N-(1,4-dicarboxybutan-1-yl)-L-glutamine + ATP = [amino-group carrier protein]-C-terminal-N-(1-carboxy-5-phosphooxy-5-oxopentan-1-yl)-L-glutamine + ADP. The catalysed reaction is [amino-group carrier protein]-C-terminal-gamma-(L-glutamyl)-L-glutamate + ATP = [amino-group carrier protein]-C-terminal-gamma-(5-phospho-L-glutamyl)-L-glutamate + ADP. It functions in the pathway amino-acid biosynthesis; L-lysine biosynthesis via AAA pathway; L-lysine from L-alpha-aminoadipate (Thermus route): step 2/5. It participates in amino-acid biosynthesis; L-arginine biosynthesis. Functionally, involved in both the arginine and lysine biosynthetic pathways. Phosphorylates the LysW-bound precursors glutamate (for arginine biosynthesis), respectively alpha-aminoadipate (for lysine biosynthesis). The polypeptide is [LysW]-aminoadipate/[LysW]-glutamate kinase (Saccharolobus islandicus (strain L.S.2.15 / Lassen #1) (Sulfolobus islandicus)).